The chain runs to 189 residues: uncharacterized protein (189 aa).

The segment covering 1–15 (MDKHGVKTPLWRKEV) has biased composition (basic and acidic residues). The segment at 1-77 (MDKHGVKTPL…SPLRQESSSQ (77 aa)) is disordered. 2 stretches are compositionally biased toward acidic residues: residues 16-29 (EDPEAREEDLEDDS) and 46-56 (SATETEEDSRD). A compositionally biased stretch (polar residues) spans 65 to 77 (VSYSPLRQESSSQ).

This is an uncharacterized protein from Mus musculus (Mouse).